The following is a 179-amino-acid chain: uncharacterized protein (179 aa).

4 helical membrane passes run 33-53 (HIIA…VILD), 63-83 (VMFI…MLVL), 89-109 (ITAS…FVLT), and 115-135 (FSPF…EYFF).

It localises to the cell membrane. This is an uncharacterized protein from Bacillus subtilis (strain 168).